Here is a 523-residue protein sequence, read N- to C-terminus: Membrane protein PTM1 (523 aa).

The signal sequence occupies residues 1–26 (MRVYQFCRPFQLFTYFLCYLLVFVKA). Topologically, residues 27–197 (NKEKISQKNY…LAGTEINKLP (171 aa)) are lumenal. Asn-132 carries an N-linked (GlcNAc...) asparagine glycan. The chain crosses the membrane as a helical span at residues 198 to 218 (LYGLLAVAYVVAMALYSFAFW). The Cytoplasmic segment spans residues 219 to 230 (KHKHELLPLQKY). A helical transmembrane segment spans residues 231 to 251 (LLAFFVFLTAETIFVWAYYDL). The Lumenal portion of the chain corresponds to 252–265 (KNEKGDTAGIKVYM). A helical transmembrane segment spans residues 266-286 (VFLSILTAGKVTFSFFLLLII). Topologically, residues 287-304 (ALGYGIVYPKLNKTLMRR) are cytoplasmic. A helical transmembrane segment spans residues 305 to 325 (CQMYGALTYAICIGFLIQSYL). Over 326 to 333 (TDMEAPSP) the chain is Lumenal. A helical transmembrane segment spans residues 334-354 (LILITLIPMALALIIFYYMII). The Cytoplasmic portion of the chain corresponds to 355-381 (RSMTKTVIYLKEQRQIVKLNMYKKLLY). The chain crosses the membrane as a helical span at residues 382–402 (IIYASFLSVLAGSIVSSFIYV). At 403–417 (GMNTIDMIEKNWRSR) the chain is on the lumenal side. A helical membrane pass occupies residues 418 to 438 (FFVTDFWPTLVYFIVFVTIAF). Residues 439–523 (LWRPTDTSYM…HGPVSPSPTK (85 aa)) are Cytoplasmic-facing. Phosphoserine is present on Ser-480. Residues Thr-483 and Thr-498 each carry the phosphothreonine modification. A disordered region spans residues 483-523 (TGERGIDEDDLNLNFTDDEEGHDNVNNHSQGHGPVSPSPTK). Positions 488 to 503 (IDEDDLNLNFTDDEEG) are enriched in acidic residues.

Belongs to the LU7TM family.

The protein localises to the golgi apparatus membrane. The protein resides in the early endosome membrane. In Saccharomyces cerevisiae (strain YJM789) (Baker's yeast), this protein is Membrane protein PTM1 (PTM1).